A 361-amino-acid chain; its full sequence is Phospho-N-acetylmuramoyl-pentapeptide-transferase (361 aa).

10 helical membrane passes run 25 to 45, 73 to 93, 97 to 117, 134 to 154, 168 to 188, 200 to 220, 237 to 257, 264 to 284, 289 to 309, and 338 to 358; these read RTVL…PAMI, TMGG…WADL, YVWI…VDDY, LFWQ…TAEL, VAVP…IVGT, GLAI…SYVA, AGEL…FLWF, VFMG…VTVI, IVML…MLQV, and QVVV…LSSL.

It belongs to the glycosyltransferase 4 family. MraY subfamily. The cofactor is Mg(2+).

It is found in the cell inner membrane. It catalyses the reaction UDP-N-acetyl-alpha-D-muramoyl-L-alanyl-gamma-D-glutamyl-meso-2,6-diaminopimeloyl-D-alanyl-D-alanine + di-trans,octa-cis-undecaprenyl phosphate = di-trans,octa-cis-undecaprenyl diphospho-N-acetyl-alpha-D-muramoyl-L-alanyl-D-glutamyl-meso-2,6-diaminopimeloyl-D-alanyl-D-alanine + UMP. Its pathway is cell wall biogenesis; peptidoglycan biosynthesis. Its function is as follows. Catalyzes the initial step of the lipid cycle reactions in the biosynthesis of the cell wall peptidoglycan: transfers peptidoglycan precursor phospho-MurNAc-pentapeptide from UDP-MurNAc-pentapeptide onto the lipid carrier undecaprenyl phosphate, yielding undecaprenyl-pyrophosphoryl-MurNAc-pentapeptide, known as lipid I. The chain is Phospho-N-acetylmuramoyl-pentapeptide-transferase from Nitrosospira multiformis (strain ATCC 25196 / NCIMB 11849 / C 71).